The chain runs to 456 residues: Aminotransferase ALD1, chloroplastic (456 aa).

The N-terminal 43 residues, Met-1–Asn-43, are a transit peptide targeting the chloroplast. Pyridoxal 5'-phosphate-binding positions include Tyr-108, Ala-142–Gln-143, Asn-223, Asp-251, Tyr-254, Ser-281, Ser-283, Arg-292, and Asn-323.

Belongs to the class-I pyridoxal-phosphate-dependent aminotransferase family. LL-diaminopimelate aminotransferase subfamily. The cofactor is pyridoxal 5'-phosphate. As to expression, highly expressed in senescing leaves, flowers, siliques and seeds.

It localises to the plastid. The protein resides in the chloroplast. Aminotransferase involved in local and systemic acquired resistance (SAR) to the bacterial pathogen P.syringae. Required for salicylic acid (SA) and camalexin accumulation upon pathogen infection. Possesses aminotransferase activity in vitro and may generate amino-acid-derived defense signals in vivo. May be involved in ethylene-induced senescence signaling. Involved in the biosynthesis of pipecolate (Pip), a metabolite that orchestrates defense amplification, positive regulation of SA biosynthesis, and priming to guarantee effective local resistance induction and the establishment of SAR. Converts lysine to alpha-keto-epsilon-aminocaproate, which then can spontaneously cyclize to form delta-(1)-piperideine-2-carboxylate (P2C). P2C is converted to Pip by SARD4. May produce non-Pip metabolites that play roles in immunity. Involved in the synthesis of distinct metabolite signals that affect basal and early defenses, and later defense responses. The sequence is that of Aminotransferase ALD1, chloroplastic from Arabidopsis thaliana (Mouse-ear cress).